An 809-amino-acid chain; its full sequence is Lon protease (809 aa).

The 196-residue stretch at 8–203 folds into the Lon N-terminal domain; sequence LPVVALRNMA…RLCLILADEI (196 aa). 354 to 361 provides a ligand contact to ATP; it reads GPPGTGKT. One can recognise a Lon proteolytic domain in the interval 629-809; that stretch reads KDEVGIVCGL…MDEVLKHALV (181 aa). Catalysis depends on residues Ser-716 and Lys-759.

The protein belongs to the peptidase S16 family. As to quaternary structure, homohexamer. Organized in a ring with a central cavity.

Its subcellular location is the cytoplasm. It carries out the reaction Hydrolysis of proteins in presence of ATP.. In terms of biological role, ATP-dependent serine protease that mediates the selective degradation of mutant and abnormal proteins as well as certain short-lived regulatory proteins. Required for cellular homeostasis and for survival from DNA damage and developmental changes induced by stress. Degrades polypeptides processively to yield small peptide fragments that are 5 to 10 amino acids long. Binds to DNA in a double-stranded, site-specific manner. In Lachnoclostridium phytofermentans (strain ATCC 700394 / DSM 18823 / ISDg) (Clostridium phytofermentans), this protein is Lon protease.